The chain runs to 237 residues: Purine nucleoside phosphorylase DeoD-type (237 aa).

His4 serves as a coordination point for a purine D-ribonucleoside. Phosphate-binding positions include Gly20, Arg24, Arg43, and 87-90 (RVGT). Residues 179-181 (EME) and 203-204 (SD) contribute to the a purine D-ribonucleoside site. The active-site Proton donor is the Asp204.

This sequence belongs to the PNP/UDP phosphorylase family. As to quaternary structure, homohexamer; trimer of homodimers.

The catalysed reaction is a purine D-ribonucleoside + phosphate = a purine nucleobase + alpha-D-ribose 1-phosphate. The enzyme catalyses a purine 2'-deoxy-D-ribonucleoside + phosphate = a purine nucleobase + 2-deoxy-alpha-D-ribose 1-phosphate. Catalyzes the reversible phosphorolytic breakdown of the N-glycosidic bond in the beta-(deoxy)ribonucleoside molecules, with the formation of the corresponding free purine bases and pentose-1-phosphate. The sequence is that of Purine nucleoside phosphorylase DeoD-type from Streptococcus pyogenes serotype M4 (strain MGAS10750).